The primary structure comprises 131 residues: Small ribosomal subunit protein uS11 (131 aa).

Over residues 1 to 15 (MAAKTVKKTRRRKER) the composition is skewed to basic residues. The tract at residues 1–23 (MAAKTVKKTRRRKERKNVEHGAA) is disordered.

The protein belongs to the universal ribosomal protein uS11 family. As to quaternary structure, part of the 30S ribosomal subunit. Interacts with proteins S7 and S18. Binds to IF-3.

In terms of biological role, located on the platform of the 30S subunit, it bridges several disparate RNA helices of the 16S rRNA. Forms part of the Shine-Dalgarno cleft in the 70S ribosome. This chain is Small ribosomal subunit protein uS11, found in Clostridium beijerinckii (strain ATCC 51743 / NCIMB 8052) (Clostridium acetobutylicum).